Reading from the N-terminus, the 459-residue chain is MRNDPFQRLGLDREVLTVSQLNQRARLLLEDVFPQVWVEGELSNLARPASGHVYFTLKDSNAQIRCALFRQNALRVRQALRDGLAVKVRGKISLFEGRGDYQLIADTVEPAGDGALRLAFEALKEKLAGEGLFASERKRLLPAHPRRIGIVSSPSGAVIRDIISVFRRRAPQVELTLVPTAVQGREAVAQIVRALQLADRQGFDALILARGGGSLEDLWCFNEEAVARAVAACATPIVSAVGHETDVSISDFVADVRAPTPSAAAELLAPNAGDLQQRLDGLRRRLVLRMRDQLLRERLRLEGVARRLRHPGERLRQQAQRLDDLDMRLRRAFERQLAVRHERLVRLETRLAAQHPGRTLALLRQKLDSLAARLPRAAREVLKDRRQRLEGLAQTLNVVSPLATLGRGYSILLDERGRAIRDAGQTQPGQRLKARLAEGELEVRVEDNHRTPVTLSLLD.

The protein belongs to the XseA family. As to quaternary structure, heterooligomer composed of large and small subunits.

The protein localises to the cytoplasm. It carries out the reaction Exonucleolytic cleavage in either 5'- to 3'- or 3'- to 5'-direction to yield nucleoside 5'-phosphates.. Its function is as follows. Bidirectionally degrades single-stranded DNA into large acid-insoluble oligonucleotides, which are then degraded further into small acid-soluble oligonucleotides. The sequence is that of Exodeoxyribonuclease 7 large subunit from Pseudomonas aeruginosa (strain LESB58).